Reading from the N-terminus, the 150-residue chain is Macrodomain Ter protein (150 aa).

This sequence belongs to the MatP family. As to quaternary structure, homodimer.

The protein localises to the cytoplasm. Its function is as follows. Required for spatial organization of the terminus region of the chromosome (Ter macrodomain) during the cell cycle. Prevents early segregation of duplicated Ter macrodomains during cell division. Binds specifically to matS, which is a 13 bp signature motif repeated within the Ter macrodomain. In Shigella dysenteriae serotype 1 (strain Sd197), this protein is Macrodomain Ter protein.